The primary structure comprises 356 residues: Poly(rC)-binding protein 1 (356 aa).

An N-acetylmethionine modification is found at M1. KH domains follow at residues 13–75 (TLTI…FAMI) and 97–162 (PVTL…VKQI). K115 participates in a covalent cross-link: Glycyl lysine isopeptide (Lys-Gly) (interchain with G-Cter in SUMO2). 6 positions are modified to phosphoserine: S173, S189, S190, S246, S264, and S273. In terms of domain architecture, KH 3 spans 279 to 343 (QTTHELTIPN…ASISLAQYLI (65 aa)).

Phosphorylated; lowers poly(rC)-binding activity.

The protein localises to the nucleus. It localises to the cytoplasm. Single-stranded nucleic acid binding protein that binds preferentially to oligo dC. Together with PCBP2, required for erythropoiesis, possibly by regulating mRNA splicing. The polypeptide is Poly(rC)-binding protein 1 (PCBP1) (Bos taurus (Bovine)).